The chain runs to 54 residues: MAGKRDKVRMISSAGTGHFYTTDKNKKNTPGKMEFLKYDPVVRKHVLYKEGKIK.

The protein belongs to the bacterial ribosomal protein bL33 family.

The chain is Large ribosomal subunit protein bL33 from Stenotrophomonas maltophilia (strain K279a).